The primary structure comprises 354 residues: Protein-arginine kinase (354 aa).

The 231-residue stretch at 24–254 folds into the Phosphagen kinase C-terminal domain; that stretch reads IVLSSRIRLA…QQIIQQEKLA (231 aa). Residues 27–31, His-92, Arg-125, 176–180, and 207–212 each bind ATP; these read SSRIR, RASVM, and RGIYGE. An RDXXRA motif of the pArg binding pocket involved in allosteric regulation motif is present at residues 337–342; sequence RDYRRA.

It belongs to the ATP:guanido phosphotransferase family.

It catalyses the reaction L-arginyl-[protein] + ATP = N(omega)-phospho-L-arginyl-[protein] + ADP + H(+). Its activity is regulated as follows. Appears to be allosterically activated by the binding of pArg-containing polypeptides to the pArg-binding pocket localized in the C-terminal domain of McsB. Catalyzes the specific phosphorylation of arginine residues in a large number of proteins. Is part of the bacterial stress response system. Protein arginine phosphorylation has a physiologically important role and is involved in the regulation of many critical cellular processes, such as protein homeostasis, motility, competence, and stringent and stress responses, by regulating gene expression and protein activity. This is Protein-arginine kinase from Bacillus cereus (strain B4264).